Here is a 920-residue protein sequence, read N- to C-terminus: Bifunctional aspartokinase/homoserine dehydrogenase 1, chloroplastic (920 aa).

The interval 1–21 (MRSLTVASRHPGAAFSTRRRP) is disordered. Residues 1–92 (MRSLTVASRH…EAIADLPKGD (92 aa)) constitute a chloroplast transit peptide. Positions 93-341 (MWSVHKFGGT…VSEAVILSTL (249 aa)) are aspartokinase. An interface region spans residues 342–566 (SYQEAWEMSY…LSKTTLAVGI (225 aa)). ACT domains follow at residues 416–491 (VEGT…VIHN) and 497–574 (TVGL…LIGR). A homoserine dehydrogenase region spans residues 567–920 (IGPGLIGRTL…RLSSYLGAPS (354 aa)). The NAD(+) site is built by isoleucine 572 and alanine 601. Residue isoleucine 572 participates in NADP(+) binding. Isoleucine 572 serves as a coordination point for NADPH. The NADP(+) site is built by arginine 604, threonine 653, and lysine 677. Threonine 653 contributes to the NAD(+) binding site. Threonine 653 and lysine 677 together coordinate NADPH. Positions 704, 707, 709, and 711 each coordinate Na(+). Glycine 762 and glutamate 765 together coordinate NADP(+). Glutamate 765 and aspartate 776 together coordinate L-homoserine. Lysine 780 serves as the catalytic Proton donor. Glycine 897 serves as a coordination point for NAD(+). An NADP(+)-binding site is contributed by glycine 897. Glycine 897 contacts NADPH.

This sequence in the N-terminal section; belongs to the aspartokinase family. In the C-terminal section; belongs to the homoserine dehydrogenase family. As to quaternary structure, homo- or heterodimer. Requires a metal cation as cofactor.

The protein resides in the plastid. It is found in the chloroplast. The catalysed reaction is L-homoserine + NADP(+) = L-aspartate 4-semialdehyde + NADPH + H(+). It catalyses the reaction L-homoserine + NAD(+) = L-aspartate 4-semialdehyde + NADH + H(+). It carries out the reaction L-aspartate + ATP = 4-phospho-L-aspartate + ADP. Its pathway is amino-acid biosynthesis; L-lysine biosynthesis via DAP pathway; (S)-tetrahydrodipicolinate from L-aspartate: step 1/4. It participates in amino-acid biosynthesis; L-methionine biosynthesis via de novo pathway; L-homoserine from L-aspartate: step 1/3. The protein operates within amino-acid biosynthesis; L-methionine biosynthesis via de novo pathway; L-homoserine from L-aspartate: step 3/3. It functions in the pathway amino-acid biosynthesis; L-threonine biosynthesis; L-threonine from L-aspartate: step 1/5. Its pathway is amino-acid biosynthesis; L-threonine biosynthesis; L-threonine from L-aspartate: step 3/5. Bifunctional aspartate kinase and homoserine dehydrogenase that catalyzes the first and the third steps toward the synthesis of lysine, methionine and threonine from aspartate. The chain is Bifunctional aspartokinase/homoserine dehydrogenase 1, chloroplastic (AKHSDH1) from Zea mays (Maize).